Here is a 319-residue protein sequence, read N- to C-terminus: Lipoyl synthase (319 aa).

A disordered region spans residues L5–K31. Residues C61, C66, C72, C87, C91, C94, and S300 each coordinate [4Fe-4S] cluster. The Radical SAM core domain maps to W73–L289.

This sequence belongs to the radical SAM superfamily. Lipoyl synthase family. The cofactor is [4Fe-4S] cluster.

The protein localises to the cytoplasm. The enzyme catalyses [[Fe-S] cluster scaffold protein carrying a second [4Fe-4S](2+) cluster] + N(6)-octanoyl-L-lysyl-[protein] + 2 oxidized [2Fe-2S]-[ferredoxin] + 2 S-adenosyl-L-methionine + 4 H(+) = [[Fe-S] cluster scaffold protein] + N(6)-[(R)-dihydrolipoyl]-L-lysyl-[protein] + 4 Fe(3+) + 2 hydrogen sulfide + 2 5'-deoxyadenosine + 2 L-methionine + 2 reduced [2Fe-2S]-[ferredoxin]. It functions in the pathway protein modification; protein lipoylation via endogenous pathway; protein N(6)-(lipoyl)lysine from octanoyl-[acyl-carrier-protein]: step 2/2. In terms of biological role, catalyzes the radical-mediated insertion of two sulfur atoms into the C-6 and C-8 positions of the octanoyl moiety bound to the lipoyl domains of lipoate-dependent enzymes, thereby converting the octanoylated domains into lipoylated derivatives. This is Lipoyl synthase from Nitrobacter winogradskyi (strain ATCC 25391 / DSM 10237 / CIP 104748 / NCIMB 11846 / Nb-255).